Reading from the N-terminus, the 143-residue chain is MFDFDATLPLMALQFVLLAIILNAIFYKPLNKALDERADYIRQNETGGQQQLAEAKELAAKYEQQLAQARKESQDIVAQAQAEAKQLATEAVAEAQKEAIAKKEAAAQEIEQQRQEALKTLEQQVDTLSRQILEKLLGPELVK.

The helical transmembrane segment at Ala6–Phe26 threads the bilayer.

This sequence belongs to the ATPase B chain family. As to quaternary structure, F-type ATPases have 2 components, F(1) - the catalytic core - and F(0) - the membrane proton channel. F(1) has five subunits: alpha(3), beta(3), gamma(1), delta(1), epsilon(1). F(0) has four main subunits: a(1), b(1), b'(1) and c(10-14). The alpha and beta chains form an alternating ring which encloses part of the gamma chain. F(1) is attached to F(0) by a central stalk formed by the gamma and epsilon chains, while a peripheral stalk is formed by the delta, b and b' chains.

The protein resides in the cellular thylakoid membrane. Its function is as follows. F(1)F(0) ATP synthase produces ATP from ADP in the presence of a proton or sodium gradient. F-type ATPases consist of two structural domains, F(1) containing the extramembraneous catalytic core and F(0) containing the membrane proton channel, linked together by a central stalk and a peripheral stalk. During catalysis, ATP synthesis in the catalytic domain of F(1) is coupled via a rotary mechanism of the central stalk subunits to proton translocation. Functionally, component of the F(0) channel, it forms part of the peripheral stalk, linking F(1) to F(0). The b'-subunit is a diverged and duplicated form of b found in plants and photosynthetic bacteria. This is ATP synthase subunit b' from Crocosphaera subtropica (strain ATCC 51142 / BH68) (Cyanothece sp. (strain ATCC 51142)).